Reading from the N-terminus, the 1109-residue chain is MAYKSQHGVDDMVMLSKIANDSILDNLKKRYGGDVIYTYIGNVLISVNPFKQIKNLYSERNLLEYRGKFRYELPPHAYAVADDMYRSMYAEGQSQCVIISGESGAGKTEAAKLIMQYIAAVSGKGADVSRVKDVILESNPLLEAFGNAKTLRNNNSSRFGKYMEVQFNGIGDPEGGRVTNYLLEKSRVVYQTKGERNFHIFYQLLSGANQQLKSELRLDTPDKFNYLSASGCYTVDGVDDSGEFQDVCKAMKVIGLTDSEQKEVFRLVAAILYLGNVGFKNNAKDEAAIDQQSKKALENFAFLMQTDVSSCEKALCFRTISTGTQGRSARVSTYACPQNSEGAYYSRDALAKALYSRLFDWIVGRVNSALGYKQNSQSLMIGILDIYGFEIFEKNGFEQMVINYVNERLQQIFIELTLKTEQEEYFNEGIQWEQIDYFNNKICCDLIESKKPAGILTILDDVCNFPKGDDQKFLDRLKESFSSHAHFQSAAQSSSSFTIKHYAGDVEYCAEGFVDKNKDLLFNDLVELAACTTSKLIPQLFPEINCEKDKRKPTTAGFKIKESIGALVKALSACTPHYIRCIKPNGNKRANDFDTSLVMHQVKYLGLLENVRIRRAGYAYRQTYDKFFYRYRVCCKETWPNWTGGFESGVETILKSMDLEPKQYSKGKTKIFIRAPETVFNLEELRERKVFTYANKLQRFFLRFTLMSYYYSIQKGAADSMKSNKERRRLSIERPYQGDYINYRENFELKDIVKKNGNEKIMFTHAVNKYDRRSRCQRRVLLLSDTAIYFIATEKNKDKEDRKKRPWIYVQKRRLLLAGITSVELSKLSDGFVVLKTMNEHDQIFECRRKTEFLGTLIKAYKTGTLRINYNNSIGVAIKASKQGGKGKERIILFEKGIKPGESVFKGTKVSTPSDGLPADTVPNLTPPESLPVVSIPIYKPAMNAKNAPQNSGGPASNVKPSAKALYDFDAESSMELSFKEGDILTVLDQSSGDWWDAELKGRRGKVPSNYLQLIKNAAPPRAGGPPVPTGNRAPTTTTTSGGSTRGGFNNGPSTAPSGRGAAPPSSRGGMAPRGGSVAPPSSRGGIAPRGGIAPRGGMAPRGGMAPRV.

One can recognise a Myosin motor domain in the interval 7–687 (HGVDDMVMLS…TVFNLEELRE (681 aa)). 101–108 (GESGAGKT) is an ATP binding site. Residues 564–586 (IGALVKALSACTPHYIRCIKPNG) form an actin-binding region. The TH1 domain occupies 725–919 (KERRRLSIER…VSTPSDGLPA (195 aa)). The region spanning 958 to 1017 (NVKPSAKALYDFDAESSMELSFKEGDILTVLDQSSGDWWDAELKGRRGKVPSNYLQLIKN) is the SH3 domain. The interval 1017–1109 (NAAPPRAGGP…APRGGMAPRV (93 aa)) is disordered. A compositionally biased stretch (low complexity) spans 1030–1043 (TGNRAPTTTTTSGG).

The protein belongs to the TRAFAC class myosin-kinesin ATPase superfamily. Myosin family. In terms of assembly, myosin I heavy chain is single-headed. Dimer of a heavy and a light chain. Inability to self-assemble into filaments.

The protein localises to the cell projection. The protein resides in the pseudopodium. It is found in the cytoplasm. Its subcellular location is the cell cortex. Its function is as follows. Myosin is a protein that binds to actin and has ATPase activity that is activated by actin. Myosin id may have a role in chemotaxis and aggregation; it could serve to stabilize and even retract cortical structures, such as pseudopods and lamellopods. Involved in the process of phagocytosis. This is Myosin ID heavy chain (myoD) from Dictyostelium discoideum (Social amoeba).